We begin with the raw amino-acid sequence, 324 residues long: D-alanine--D-alanine ligase (324 aa).

Positions 116 to 311 (KQVWHTLGIP…FQQLVLAILA (196 aa)) constitute an ATP-grasp domain. 142-197 (ATELGFPLIVKPAHEGSSIGMAKVSSASELIDAWKAASTYDSQVLVEQWIHGPEFT) provides a ligand contact to ATP. Mg(2+)-binding residues include aspartate 265, glutamate 278, and asparagine 280.

The protein belongs to the D-alanine--D-alanine ligase family. Mg(2+) serves as cofactor. The cofactor is Mn(2+).

It is found in the cytoplasm. It carries out the reaction 2 D-alanine + ATP = D-alanyl-D-alanine + ADP + phosphate + H(+). It participates in cell wall biogenesis; peptidoglycan biosynthesis. Its function is as follows. Cell wall formation. This is D-alanine--D-alanine ligase from Pseudomonas fluorescens (strain Pf0-1).